The chain runs to 651 residues: Beta-glucuronidase (651 aa).

The N-terminal stretch at 1–22 is a signal peptide; the sequence is MARGSAVAWAAFGPLLWGCALG. N-linked (GlcNAc...) asparagine glycans are attached at residues Asn-173, Asn-190, Asn-272, and Asn-420. Glu-451 acts as the Proton donor in catalysis. Residue Asn-631 is glycosylated (N-linked (GlcNAc...) asparagine).

It belongs to the glycosyl hydrolase 2 family. Homotetramer.

Its subcellular location is the lysosome. It catalyses the reaction a beta-D-glucuronoside + H2O = D-glucuronate + an alcohol. With respect to regulation, inhibited by L-aspartic acid. In terms of biological role, plays an important role in the degradation of dermatan and keratan sulfates. The protein is Beta-glucuronidase (GUSB) of Pongo abelii (Sumatran orangutan).